The sequence spans 159 residues: MSSQSFHNSPSLRVILKQRKKKRLLIVLFCCLIIAIATSLITYALRNTVSFFRMPSEVTKEDILMGRPLRLGGFVEKGTVEYVGDRGVIFFVTDNVKHEKVIFSGAIPDLFREGQGVVVEGYFDKQGFFIGTRILAKHDETYMSRETADRLNKHHRVEK.

Residues 1 to 23 (MSSQSFHNSPSLRVILKQRKKKR) lie on the Cytoplasmic side of the membrane. The helical; Signal-anchor for type II membrane protein transmembrane segment at 24–44 (LLIVLFCCLIIAIATSLITYA) threads the bilayer. The Periplasmic segment spans residues 45-159 (LRNTVSFFRM…RLNKHHRVEK (115 aa)). Heme contacts are provided by His138 and Tyr142.

The protein belongs to the CcmE/CycJ family.

It localises to the cell inner membrane. Heme chaperone required for the biogenesis of c-type cytochromes. Transiently binds heme delivered by CcmC and transfers the heme to apo-cytochromes in a process facilitated by CcmF and CcmH. This Bartonella henselae (strain ATCC 49882 / DSM 28221 / CCUG 30454 / Houston 1) (Rochalimaea henselae) protein is Cytochrome c-type biogenesis protein CcmE.